The sequence spans 203 residues: Small ribosomal subunit protein uS4 (203 aa).

The region spanning 93-156 (RRLDNVVYRL…MKVPAILEAV (64 aa)) is the S4 RNA-binding domain.

The protein belongs to the universal ribosomal protein uS4 family. As to quaternary structure, part of the 30S ribosomal subunit. Contacts protein S5. The interaction surface between S4 and S5 is involved in control of translational fidelity.

One of the primary rRNA binding proteins, it binds directly to 16S rRNA where it nucleates assembly of the body of the 30S subunit. Functionally, with S5 and S12 plays an important role in translational accuracy. This Streptococcus uberis (strain ATCC BAA-854 / 0140J) protein is Small ribosomal subunit protein uS4.